Here is a 448-residue protein sequence, read N- to C-terminus: Eukaryotic translation initiation factor 3 subunit E (448 aa).

In terms of domain architecture, PCI spans 254–423; that stretch reads TDLFFSPAYI…GTVIMNHPPQ (170 aa).

It belongs to the eIF-3 subunit E family. As to quaternary structure, component of the eukaryotic translation initiation factor 3 (eIF-3) complex.

The protein localises to the cytoplasm. Component of the eukaryotic translation initiation factor 3 (eIF-3) complex, which is involved in protein synthesis of a specialized repertoire of mRNAs and, together with other initiation factors, stimulates binding of mRNA and methionyl-tRNAi to the 40S ribosome. The eIF-3 complex specifically targets and initiates translation of a subset of mRNAs involved in cell proliferation. This Emericella nidulans (strain FGSC A4 / ATCC 38163 / CBS 112.46 / NRRL 194 / M139) (Aspergillus nidulans) protein is Eukaryotic translation initiation factor 3 subunit E (int6).